The chain runs to 367 residues: Deoxyhypusine synthase-like protein (367 aa).

A disordered region spans residues 1–23; the sequence is MKSLFQRRASKVRETEAMNAPVP.

The protein belongs to the deoxyhypusine synthase family.

In Caulobacter vibrioides (strain ATCC 19089 / CIP 103742 / CB 15) (Caulobacter crescentus), this protein is Deoxyhypusine synthase-like protein.